Here is a 460-residue protein sequence, read N- to C-terminus: Elongation factor 1-alpha 3 (460 aa).

Residues 6–243 (KTHINIVVIG…DCIIPPQRPT (238 aa)) form the tr-type G domain. Residues 15–22 (GHVDSGKS) form a G1 region. A G2 region spans residues 71-75 (GITID). The segment at 92 to 95 (DAPG) is G3. Residues 154 to 157 (NKMD) are G4. Positions 195-197 (SGF) are G5. A 5-glutamyl glycerylphosphorylethanolamine mark is found at Glu302 and Glu375.

Belongs to the TRAFAC class translation factor GTPase superfamily. Classic translation factor GTPase family. EF-Tu/EF-1A subfamily.

The protein resides in the cytoplasm. Functionally, this protein promotes the GTP-dependent binding of aminoacyl-tRNA to the A-site of ribosomes during protein biosynthesis. This chain is Elongation factor 1-alpha 3 (eft-3), found in Oscheius tipulae.